A 334-amino-acid polypeptide reads, in one-letter code: Glucokinase-like protein XF_1460 (334 aa).

18-23 is an ATP binding site; sequence ADVGGT.

Belongs to the bacterial glucokinase family.

This is Glucokinase-like protein XF_1460 from Xylella fastidiosa (strain 9a5c).